We begin with the raw amino-acid sequence, 475 residues long: MSPQTETKTSAGFKAGVKDYRLTYYTPEYKTKDTDILAAFRVTPQPGVPPEEAGAAVAAESSTGTWTTVWTDGLTSLDRYKGRCYDIEPVAGEENQFIAYVAYPLDLFEEGSVTNLFTSIVGNVFGFKALRALRLEDLRIPPAYTKTFQGPPHGIQVERDKLNKYGRPLLGCTIKPKLGLSAKNYGRAVYECLRGGLDFTKDDENVNSQPFMRWRDRFLFVAEAIYKSQAETGEIKGHYLNATAGTCEEMLKRAQCARELGMPIVMHDYLTGGFTANTTLAHYCRDNGLLLHIHRAMHAVLDRQKNHGMHFRVLAKALRLSGGDHVHSGTVVGKLEGEREVTLGFVDLLRDDYIEKDRSRGVYFTQDWVSLPGVLPVASGGIHVWHMPALTEIFGDDSVLQFGGGTLGHPWGNAPGAVANRVALEACVQARNEGRDLAREGNEIIREAAKWSPELAAACEVWKEIKFEFETIDTL.

The propeptide occupies 1 to 2 (MS). At P3 the chain carries N-acetylproline. Position 14 is an N6,N6,N6-trimethyllysine (K14). 2 residues coordinate substrate: N123 and T173. The Proton acceptor role is filled by K175. K177 provides a ligand contact to substrate. Positions 201, 203, and 204 each coordinate Mg(2+). Position 201 is an N6-carboxylysine (K201). H294 serves as the catalytic Proton acceptor. Substrate contacts are provided by R295, H327, and S379.

It belongs to the RuBisCO large chain family. Type I subfamily. As to quaternary structure, heterohexadecamer of 8 large chains and 8 small chains; disulfide-linked. The disulfide link is formed within the large subunit homodimers. Requires Mg(2+) as cofactor. In terms of processing, the disulfide bond which can form in the large chain dimeric partners within the hexadecamer appears to be associated with oxidative stress and protein turnover.

The protein resides in the plastid. The protein localises to the chloroplast. It catalyses the reaction 2 (2R)-3-phosphoglycerate + 2 H(+) = D-ribulose 1,5-bisphosphate + CO2 + H2O. The enzyme catalyses D-ribulose 1,5-bisphosphate + O2 = 2-phosphoglycolate + (2R)-3-phosphoglycerate + 2 H(+). Functionally, ruBisCO catalyzes two reactions: the carboxylation of D-ribulose 1,5-bisphosphate, the primary event in carbon dioxide fixation, as well as the oxidative fragmentation of the pentose substrate in the photorespiration process. Both reactions occur simultaneously and in competition at the same active site. This Chara vulgaris (Common stonewort) protein is Ribulose bisphosphate carboxylase large chain.